The chain runs to 248 residues: MAPRKFFVGGNWKMNGDKKSLGELIHTLNGAKLSADTEVVCGAPSIYLDFARQKLDAKIGVAAQNCYKVPKGAFTGEISPAMIKDIGAAWVILGHSERRHVFGESDELIGQKVAHALAEGLGVIACIGEKLDEREAGITEKVVFEQTKAIADNVKDWSKVVLAYEPVWAIGTGKTATPQQAQEVHEKLRGWLKSHVSDAVAQSTRIIYGGSVTGGNCKELASQHDVDGFLVGGASLKPEFVDIINAKH.

Positions 11 and 13 each coordinate substrate. His-95 serves as the catalytic Electrophile. The active-site Proton acceptor is the Glu-165.

It belongs to the triosephosphate isomerase family. In terms of assembly, homodimer.

The protein localises to the cytoplasm. It carries out the reaction dihydroxyacetone phosphate = methylglyoxal + phosphate. The enzyme catalyses D-glyceraldehyde 3-phosphate = dihydroxyacetone phosphate. The protein operates within carbohydrate degradation; glycolysis; D-glyceraldehyde 3-phosphate from glycerone phosphate: step 1/1. It functions in the pathway carbohydrate biosynthesis; gluconeogenesis. Its function is as follows. Triosephosphate isomerase is an extremely efficient metabolic enzyme that catalyzes the interconversion between dihydroxyacetone phosphate (DHAP) and D-glyceraldehyde-3-phosphate (G3P) in glycolysis and gluconeogenesis. In terms of biological role, it is also responsible for the non-negligible production of methylglyoxal a reactive cytotoxic side-product that modifies and can alter proteins, DNA and lipids. The sequence is that of Triosephosphate isomerase (TPI1) from Gallus gallus (Chicken).